The following is a 130-amino-acid chain: RutC family protein HI_0719 (130 aa).

The active site involves Cys-109.

This sequence belongs to the RutC family. Homotrimer.

The polypeptide is RutC family protein HI_0719 (Haemophilus influenzae (strain ATCC 51907 / DSM 11121 / KW20 / Rd)).